The chain runs to 544 residues: Apolipoprotein N-acyltransferase 1 (544 aa).

6 helical membrane-spanning segments follow: residues 30 to 50, 57 to 79, 91 to 111, 115 to 135, 157 to 177, and 197 to 217; these read LNLN…FLLL, FSFL…WIIF, KYCI…SYFS, FIFQ…GFLG, IFGV…SASF, and PMMI…FTKI. One can recognise a CN hydrolase domain in the interval 225–501; the sequence is ARIALVQPNR…KDILVADVTV (277 aa). The active-site Proton acceptor is glutamate 272. Lysine 360 is an active-site residue. The Nucleophile role is filled by cysteine 412. The helical transmembrane segment at 514 to 534 threads the bilayer; the sequence is GDFFGVLCTIVLILNLCFIII.

This sequence belongs to the CN hydrolase family. Apolipoprotein N-acyltransferase subfamily.

It is found in the cell inner membrane. It catalyses the reaction N-terminal S-1,2-diacyl-sn-glyceryl-L-cysteinyl-[lipoprotein] + a glycerophospholipid = N-acyl-S-1,2-diacyl-sn-glyceryl-L-cysteinyl-[lipoprotein] + a 2-acyl-sn-glycero-3-phospholipid + H(+). It functions in the pathway protein modification; lipoprotein biosynthesis (N-acyl transfer). Catalyzes the phospholipid dependent N-acylation of the N-terminal cysteine of apolipoprotein, the last step in lipoprotein maturation. The protein is Apolipoprotein N-acyltransferase 1 of Treponema denticola (strain ATCC 35405 / DSM 14222 / CIP 103919 / JCM 8153 / KCTC 15104).